Here is a 721-residue protein sequence, read N- to C-terminus: Polyribonucleotide nucleotidyltransferase (721 aa).

Residues Asp495 and Asp501 each contribute to the Mg(2+) site. Residues 562 to 621 (PRLLSFRIDPELIGTVIGPGGRTIKGITERTNTKIDIEDGGIVTIASHDGAAAEEAQKII) form the KH domain. Residues 631 to 699 (GEIFTGVVTR…SRGRINLTLR (69 aa)) form the S1 motif domain. Residues 702 to 721 (SQNSGMSYPEPTPTPVAPLN) are disordered. Over residues 711-721 (EPTPTPVAPLN) the composition is skewed to pro residues.

Belongs to the polyribonucleotide nucleotidyltransferase family. It depends on Mg(2+) as a cofactor.

The protein resides in the cytoplasm. It catalyses the reaction RNA(n+1) + phosphate = RNA(n) + a ribonucleoside 5'-diphosphate. In terms of biological role, involved in mRNA degradation. Catalyzes the phosphorolysis of single-stranded polyribonucleotides processively in the 3'- to 5'-direction. The polypeptide is Polyribonucleotide nucleotidyltransferase (Prochlorococcus marinus (strain MIT 9312)).